The primary structure comprises 246 residues: Acetylglutamate kinase (246 aa).

Substrate-binding positions include 30 to 31 (GG), arginine 52, and asparagine 151.

The protein belongs to the acetylglutamate kinase family. ArgB subfamily.

The protein localises to the cytoplasm. It carries out the reaction N-acetyl-L-glutamate + ATP = N-acetyl-L-glutamyl 5-phosphate + ADP. It functions in the pathway amino-acid biosynthesis; L-arginine biosynthesis; N(2)-acetyl-L-ornithine from L-glutamate: step 2/4. Its function is as follows. Catalyzes the ATP-dependent phosphorylation of N-acetyl-L-glutamate. In Methanopyrus kandleri (strain AV19 / DSM 6324 / JCM 9639 / NBRC 100938), this protein is Acetylglutamate kinase.